Consider the following 376-residue polypeptide: Probable ribonucleoside-diphosphate reductase small subunit 048L (376 aa).

Fe cation is bound by residues D110, E140, and H143. Y147 is a catalytic residue. Residues E217, E251, and H254 each contribute to the Fe cation site.

This sequence belongs to the ribonucleoside diphosphate reductase small chain family. Heterotetramer composed of a homodimer of the large subunit (R1) and a homodimer of the small subunit (R2). Larger multisubunit protein complex are also active, composed of (R1)n(R2)n. Requires Fe cation as cofactor.

It carries out the reaction a 2'-deoxyribonucleoside 5'-diphosphate + [thioredoxin]-disulfide + H2O = a ribonucleoside 5'-diphosphate + [thioredoxin]-dithiol. Ribonucleoside-diphosphate reductase holoenzyme provides the precursors necessary for viral DNA synthesis. Allows virus growth in non-dividing cells. Catalyzes the biosynthesis of deoxyribonucleotides from the corresponding ribonucleotides. This is Probable ribonucleoside-diphosphate reductase small subunit 048L from Invertebrate iridescent virus 3 (IIV-3).